The following is a 405-amino-acid chain: MRRCRACGSPRLLYHSELYDLSIAHIDCDAFYASVEKRDNPELADKPVIVGGGKRGVVSTACYIARIHGVRSAMPMFKALEACPDAVVIKPDMEKYSRVGREIRTMMQELTPLVQPLSIDEAFLDLSGTEKLHHDPPARVLAKFTGRVEKEVGVSVSAGLSYCKFLAKVASDLQKPRGFSVVGEAEALSFLAARPVTTIWGVGKAFAATLEADGIRMIAQLQEMEESELMRRYGVMGQRLFRLARGIDERHVHNNDPVKSVSSETTFFHDISRHEDLVPILRSLSEKVAWRLKKSGIAGQTVVLKMKTADFKSRTRNRRLDDPTQLADRIFRTGLALLEKETDGTKFRLIGIGVSDLRDAGLADPPDLVDRQATRRAAAEAAMDKLRDKFGKGSVETGYTFRTRK.

The 181-residue stretch at Ile-23–Gly-203 folds into the UmuC domain. Residues Asp-27 and Asp-120 each contribute to the Mg(2+) site. Glu-121 is an active-site residue.

Belongs to the DNA polymerase type-Y family. As to quaternary structure, monomer. Mg(2+) serves as cofactor.

Its subcellular location is the cytoplasm. It carries out the reaction DNA(n) + a 2'-deoxyribonucleoside 5'-triphosphate = DNA(n+1) + diphosphate. In terms of biological role, poorly processive, error-prone DNA polymerase involved in untargeted mutagenesis. Copies undamaged DNA at stalled replication forks, which arise in vivo from mismatched or misaligned primer ends. These misaligned primers can be extended by PolIV. Exhibits no 3'-5' exonuclease (proofreading) activity. May be involved in translesional synthesis, in conjunction with the beta clamp from PolIII. This Agrobacterium fabrum (strain C58 / ATCC 33970) (Agrobacterium tumefaciens (strain C58)) protein is DNA polymerase IV 1 (dinB1).